We begin with the raw amino-acid sequence, 545 residues long: Chaperonin GroEL 2 (545 aa).

ATP-binding positions include 30 to 33 (TLGP), Lys-51, 87 to 91 (DGTTT), Gly-415, and Asp-494. The tract at residues 526–545 (EKGAGMPGMPPGGGYPGMGM) is disordered. Over residues 536 to 545 (PGGGYPGMGM) the composition is skewed to gly residues.

The protein belongs to the chaperonin (HSP60) family. Forms a cylinder of 14 subunits composed of two heptameric rings stacked back-to-back. Interacts with the co-chaperonin GroES.

It localises to the cytoplasm. The catalysed reaction is ATP + H2O + a folded polypeptide = ADP + phosphate + an unfolded polypeptide.. Functionally, together with its co-chaperonin GroES, plays an essential role in assisting protein folding. The GroEL-GroES system forms a nano-cage that allows encapsulation of the non-native substrate proteins and provides a physical environment optimized to promote and accelerate protein folding. The chain is Chaperonin GroEL 2 from Syntrophus aciditrophicus (strain SB).